The following is a 227-amino-acid chain: Cytochrome c oxidase subunit 2 (227 aa).

The Mitochondrial intermembrane portion of the chain corresponds to 1-14 (MAYPFQLGLQDATS). The chain crosses the membrane as a helical span at residues 15 to 45 (PIMEELLHFHDHTLMIVFLISSLVLYIISLM). Topologically, residues 46-59 (LTTKLTHTSTMDAQ) are mitochondrial matrix. A helical transmembrane segment spans residues 60-87 (EVETVWTILPAIILILIALPSLRILYMM). The Mitochondrial intermembrane segment spans residues 88–227 (DEINNPSLTV…YFEAWSALMV (140 aa)). Cu cation contacts are provided by His161, Cys196, Glu198, Cys200, His204, and Met207. Glu198 contacts Mg(2+). Position 218 is a phosphotyrosine (Tyr218).

Belongs to the cytochrome c oxidase subunit 2 family. As to quaternary structure, component of the cytochrome c oxidase (complex IV, CIV), a multisubunit enzyme composed of 14 subunits. The complex is composed of a catalytic core of 3 subunits MT-CO1, MT-CO2 and MT-CO3, encoded in the mitochondrial DNA, and 11 supernumerary subunits COX4I, COX5A, COX5B, COX6A, COX6B, COX6C, COX7A, COX7B, COX7C, COX8 and NDUFA4, which are encoded in the nuclear genome. The complex exists as a monomer or a dimer and forms supercomplexes (SCs) in the inner mitochondrial membrane with NADH-ubiquinone oxidoreductase (complex I, CI) and ubiquinol-cytochrome c oxidoreductase (cytochrome b-c1 complex, complex III, CIII), resulting in different assemblies (supercomplex SCI(1)III(2)IV(1) and megacomplex MCI(2)III(2)IV(2)). Found in a complex with TMEM177, COA6, COX18, COX20, SCO1 and SCO2. Interacts with TMEM177 in a COX20-dependent manner. Interacts with COX20. Interacts with COX16. Cu cation is required as a cofactor.

The protein localises to the mitochondrion inner membrane. It catalyses the reaction 4 Fe(II)-[cytochrome c] + O2 + 8 H(+)(in) = 4 Fe(III)-[cytochrome c] + 2 H2O + 4 H(+)(out). Its function is as follows. Component of the cytochrome c oxidase, the last enzyme in the mitochondrial electron transport chain which drives oxidative phosphorylation. The respiratory chain contains 3 multisubunit complexes succinate dehydrogenase (complex II, CII), ubiquinol-cytochrome c oxidoreductase (cytochrome b-c1 complex, complex III, CIII) and cytochrome c oxidase (complex IV, CIV), that cooperate to transfer electrons derived from NADH and succinate to molecular oxygen, creating an electrochemical gradient over the inner membrane that drives transmembrane transport and the ATP synthase. Cytochrome c oxidase is the component of the respiratory chain that catalyzes the reduction of oxygen to water. Electrons originating from reduced cytochrome c in the intermembrane space (IMS) are transferred via the dinuclear copper A center (CU(A)) of subunit 2 and heme A of subunit 1 to the active site in subunit 1, a binuclear center (BNC) formed by heme A3 and copper B (CU(B)). The BNC reduces molecular oxygen to 2 water molecules using 4 electrons from cytochrome c in the IMS and 4 protons from the mitochondrial matrix. The chain is Cytochrome c oxidase subunit 2 (MT-CO2) from Cuon alpinus (Dhole).